A 320-amino-acid chain; its full sequence is Glyoxylate/hydroxypyruvate reductase B (320 aa).

Residues R233 and E262 contribute to the active site. H281 (proton donor) is an active-site residue.

Belongs to the D-isomer specific 2-hydroxyacid dehydrogenase family. GhrB subfamily. Homodimer.

The protein resides in the cytoplasm. The enzyme catalyses glycolate + NADP(+) = glyoxylate + NADPH + H(+). The catalysed reaction is (R)-glycerate + NAD(+) = 3-hydroxypyruvate + NADH + H(+). It catalyses the reaction (R)-glycerate + NADP(+) = 3-hydroxypyruvate + NADPH + H(+). In terms of biological role, catalyzes the NADPH-dependent reduction of glyoxylate and hydroxypyruvate into glycolate and glycerate, respectively. This Pectobacterium atrosepticum (strain SCRI 1043 / ATCC BAA-672) (Erwinia carotovora subsp. atroseptica) protein is Glyoxylate/hydroxypyruvate reductase B.